The following is a 333-amino-acid chain: Perchlorate reductase subunit beta (333 aa).

The region spanning 12–40 (LTYVTDLNKCIGCQTCTVACKKLWTTGPG) is the 4Fe-4S ferredoxin-type 1 domain. 4 residues coordinate [4Fe-4S] cluster: Cys-21, Cys-24, Cys-27, and Cys-31. Residues 101–121 (KERVRPSPTPRSAPNWDEDQG) form a disordered region. 2 4Fe-4S ferredoxin-type domains span residues 128-159 (NSFFYLPRMCNHCTKPACLEACPNEAIYKREQ) and 161-190 (GIVVIHQDKCKGAQACVQSCPYAKPYFNPV). 3 residues coordinate [4Fe-4S] cluster: Cys-137, Cys-140, and Cys-145. [3Fe-4S] cluster is bound by residues Cys-149, Cys-170, and Cys-176. Cys-180, Cys-197, Cys-200, Cys-212, and Cys-216 together coordinate [4Fe-4S] cluster.

Heterotrimer of alpha, beta and gamma subunits. It depends on [3Fe-4S] cluster as a cofactor. [4Fe-4S] cluster is required as a cofactor.

The protein localises to the periplasm. Functionally, component of the perchlorate reductase that catalyzes the reduction of perchlorate to chlorite and allows anaerobic growth on perchlorate as the sole electron acceptor. The beta subunit may be responsible for electron transfer to the catalytic alpha subunit PcrA. The protein is Perchlorate reductase subunit beta (pcrB) of Dechloromonas aromatica (strain RCB).